The primary structure comprises 306 residues: N(1)-aminopropylagmatine ureohydrolase (306 aa).

Residues histidine 121, aspartate 145, histidine 147, aspartate 149, aspartate 228, and aspartate 230 each coordinate Mn(2+).

This sequence belongs to the arginase family. Mn(2+) serves as cofactor.

It catalyses the reaction N(1)-(3-aminopropyl)agmatine + H2O = urea + spermidine. Its pathway is amine and polyamine biosynthesis; spermidine biosynthesis. Functionally, ureohydrolase involved in the biosynthesis of spermidine via the carboxyaminopropylagmatine (CAPA) pathway. Catalyzes the conversion of aminopropylagmatine (APA) to spermidine and urea. Is highly specific to APA and incapable of releasing measurable urea from CAPA, agmatine, arginine, guanidine, guanidinobutyrate and guanidinopropionate. The polypeptide is N(1)-aminopropylagmatine ureohydrolase (Synechocystis sp. (strain ATCC 27184 / PCC 6803 / Kazusa)).